The sequence spans 70 residues: Putative venom toxin Ts29 (70 aa).

Residues 1–20 form the signal peptide; that stretch reads MSPLFVVLLIATTTFYHSDA.

Expressed by the venom gland.

The protein resides in the secreted. The protein is Putative venom toxin Ts29 of Tityus serrulatus (Brazilian scorpion).